A 375-amino-acid polypeptide reads, in one-letter code: MTCSITELAKKLISIPSVSPKDLGCQDIIIKRLCAIGFDIKRVNVNDTKNFWAFRGTGKTLTFAGHTDVVPIGQDKDWQTDPFQPVIRSGYLFGRGSADMKGALAAMITAAERFVNKFPNHKGRLSFLITSDEESSAVDGTIKVVEYLMSKRDMIDYCIVGEPSSTNIVGDVIKNGRRGSITANITIHGIQGHIAYPDLADNPIHKGLPVILKILSIKLDSGNDFFLPSSINIANIHAGNGFNNVIPGSLFVQFNIRFSSEVSEKHIQSQIVNILNSNDINYSIEWLFSGKPFITKKGLLIDTVIQSIFYFNKKKPILSTSGGTSDGRFIALMGSEVVELGLVNNTIHKVNECVKISDLKLLSCMYEDIMKNLLS.

Histidine 66 is a binding site for Zn(2+). Aspartate 68 is a catalytic residue. Aspartate 99 contacts Zn(2+). Glutamate 133 acts as the Proton acceptor in catalysis. Residues glutamate 134, glutamate 162, and histidine 348 each contribute to the Zn(2+) site.

The protein belongs to the peptidase M20A family. DapE subfamily. In terms of assembly, homodimer. Zn(2+) is required as a cofactor. Requires Co(2+) as cofactor.

It carries out the reaction N-succinyl-(2S,6S)-2,6-diaminopimelate + H2O = (2S,6S)-2,6-diaminopimelate + succinate. Its pathway is amino-acid biosynthesis; L-lysine biosynthesis via DAP pathway; LL-2,6-diaminopimelate from (S)-tetrahydrodipicolinate (succinylase route): step 3/3. In terms of biological role, catalyzes the hydrolysis of N-succinyl-L,L-diaminopimelic acid (SDAP), forming succinate and LL-2,6-diaminopimelate (DAP), an intermediate involved in the bacterial biosynthesis of lysine and meso-diaminopimelic acid, an essential component of bacterial cell walls. This Buchnera aphidicola subsp. Acyrthosiphon pisum (strain 5A) protein is Succinyl-diaminopimelate desuccinylase.